A 344-amino-acid chain; its full sequence is GTPase Obg (344 aa).

An Obg domain is found at 1 to 159; sequence MKFLDEAKVY…MWLILRLKLI (159 aa). Positions 160-327 constitute an OBG-type G domain; the sequence is ADAGLVGLPN…ALRAIQAQLD (168 aa). Residues 166-173, 191-195, 212-215, 279-282, and 308-310 each bind GTP; these read GLPNAGKS, FTTLH, DIPG, SKAD, and SAA. Residues Ser173 and Thr193 each contribute to the Mg(2+) site.

Belongs to the TRAFAC class OBG-HflX-like GTPase superfamily. OBG GTPase family. As to quaternary structure, monomer. Mg(2+) serves as cofactor.

Its subcellular location is the cytoplasm. Its function is as follows. An essential GTPase which binds GTP, GDP and possibly (p)ppGpp with moderate affinity, with high nucleotide exchange rates and a fairly low GTP hydrolysis rate. Plays a role in control of the cell cycle, stress response, ribosome biogenesis and in those bacteria that undergo differentiation, in morphogenesis control. This chain is GTPase Obg, found in Methylorubrum extorquens (strain CM4 / NCIMB 13688) (Methylobacterium extorquens).